Here is a 398-residue protein sequence, read N- to C-terminus: Stearoyl-[acyl-carrier-protein] 9-desaturase, chloroplastic (398 aa).

The transit peptide at 1–34 (MALKLHHTAFNPSMAVTSSGLPRSYHLRSHRVFM) directs the protein to the chloroplast. Residues 46 to 66 (IPNAKKPHMPPREAHVQKTHS) are disordered. Fe cation contacts are provided by glutamate 140, glutamate 178, histidine 181, glutamate 231, glutamate 264, and histidine 267.

Belongs to the fatty acid desaturase type 2 family. As to quaternary structure, homodimer. Fe(2+) is required as a cofactor.

Its subcellular location is the plastid. The protein localises to the chloroplast. It catalyses the reaction octadecanoyl-[ACP] + 2 reduced [2Fe-2S]-[ferredoxin] + O2 + 2 H(+) = (9Z)-octadecenoyl-[ACP] + 2 oxidized [2Fe-2S]-[ferredoxin] + 2 H2O. Its pathway is lipid metabolism; fatty acid metabolism. Functionally, converts stearoyl-ACP to oleoyl-ACP by introduction of a cis double bond between carbons 9 and 10 of the acyl chain. This Simmondsia chinensis (Jojoba) protein is Stearoyl-[acyl-carrier-protein] 9-desaturase, chloroplastic.